The following is a 247-amino-acid chain: Hydroxyacylglutathione hydrolase 1 (247 aa).

The Zn(2+) site is built by histidine 54, histidine 56, aspartate 58, histidine 59, histidine 111, aspartate 128, and histidine 165.

This sequence belongs to the metallo-beta-lactamase superfamily. Glyoxalase II family. In terms of assembly, monomer. Requires Zn(2+) as cofactor.

The catalysed reaction is an S-(2-hydroxyacyl)glutathione + H2O = a 2-hydroxy carboxylate + glutathione + H(+). Its pathway is secondary metabolite metabolism; methylglyoxal degradation; (R)-lactate from methylglyoxal: step 2/2. Thiolesterase that catalyzes the hydrolysis of S-D-lactoyl-glutathione to form glutathione and D-lactic acid. This chain is Hydroxyacylglutathione hydrolase 1, found in Vibrio vulnificus (strain YJ016).